The sequence spans 206 residues: Tektin bundle-interacting protein 1 (206 aa).

In terms of assembly, microtubule inner protein component of sperm flagellar doublet microtubules.

It localises to the cytoplasm. Its subcellular location is the cytoskeleton. It is found in the cilium axoneme. The protein resides in the flagellum axoneme. Functionally, microtubule inner protein (MIP) part of the dynein-decorated doublet microtubules (DMTs) in cilia axoneme, which is required for motile cilia beating. Located at the center of the tektin bundle where may function to recruit tektins or stabilize the bundle. This is Tektin bundle-interacting protein 1 from Mus musculus (Mouse).